We begin with the raw amino-acid sequence, 467 residues long: ATP synthase subunit beta (467 aa).

150–157 (GGAGVGKT) is a binding site for ATP.

The protein belongs to the ATPase alpha/beta chains family. F-type ATPases have 2 components, CF(1) - the catalytic core - and CF(0) - the membrane proton channel. CF(1) has five subunits: alpha(3), beta(3), gamma(1), delta(1), epsilon(1). CF(0) has three main subunits: a(1), b(2) and c(9-12). The alpha and beta chains form an alternating ring which encloses part of the gamma chain. CF(1) is attached to CF(0) by a central stalk formed by the gamma and epsilon chains, while a peripheral stalk is formed by the delta and b chains.

It is found in the cell inner membrane. The catalysed reaction is ATP + H2O + 4 H(+)(in) = ADP + phosphate + 5 H(+)(out). Functionally, produces ATP from ADP in the presence of a proton gradient across the membrane. The catalytic sites are hosted primarily by the beta subunits. The chain is ATP synthase subunit beta from Vibrio vulnificus (strain YJ016).